The following is a 367-amino-acid chain: Alpha-2-HS-glycoprotein (367 aa).

The signal sequence occupies residues 1–18 (MKSLVLLLCLAQLWGCHS). The Cystatin fetuin-A-type 1 domain occupies 27–133 (YRQPNCDDPE…KFSVVYAKCD (107 aa)). Cystine bridges form between C32–C358, C89–C100, C114–C132, C146–C149, C208–C219, and C230–C247. The residue at position 134 (S134) is a Phosphoserine. 2 positions are modified to phosphoserine; by FAM20C: S135 and S138. The 112-residue stretch at 144–255 (KVCQDCPLLA…TCMVFQTQPV (112 aa)) folds into the Cystatin fetuin-A-type 2 domain. 2 N-linked (GlcNAc...) (complex) asparagine glycosylation sites follow: N156 and N176. Residues 255 to 298 (VSSQPQPEGANEAVPTPVVDPDAPPSPPLGAPGLPPAGSPPDSH) are disordered. The O-linked (GalNAc...) threonine glycan is linked to T270. Over residues 276–293 (DAPPSPPLGAPGLPPAGS) the composition is skewed to pro residues. Residues S280 and S293 are each glycosylated (O-linked (GalNAc...) serine). Positions 301–340 (LAAPPGHQLHRAHYDLRHTFMGVVSLGSPSGEVSHPRKTR) are cleaved as a propeptide — connecting peptide. Position 319 is a phosphothreonine; by FAM20C (T319). Phosphoserine; by FAM20C occurs at positions 325, 328, and 330. Residues T339 and T341 are each glycosylated (O-linked (GalNAc...) threonine). S346 carries an O-linked (GalNAc...) serine glycan.

The protein belongs to the fetuin family. In terms of assembly, alpha-2-HS glycoprotein derives from this precursor, when the connecting peptide is cleaved off. The two chains A and B are held together by a single disulfide bond. In terms of processing, phosphorylated by FAM20C in the extracellular medium. O- and N-glycosylated. O-glycosylated with core 1 or possibly core 8 glycans. N-glycan at Asn-156: Hex5HexNAc4; N-glycan heterogeneity at Asn-176: Hex5HexNAc4 (major) and Hex6HexNAc5 (minor). As to expression, synthesized in liver and selectively concentrated in bone matrix. Secreted in plasma. It is also found in dentin in much higher quantities than other plasma proteins.

It localises to the secreted. Its function is as follows. Promotes endocytosis, possesses opsonic properties and influences the mineral phase of bone. Shows affinity for calcium and barium ions. This chain is Alpha-2-HS-glycoprotein (AHSG), found in Homo sapiens (Human).